The following is a 244-amino-acid chain: Small ribosomal subunit protein uS2m (244 aa).

It belongs to the universal ribosomal protein uS2 family.

It is found in the mitochondrion. The chain is Small ribosomal subunit protein uS2m (mrps2) from Dictyostelium discoideum (Social amoeba).